The sequence spans 203 residues: Endo-type membrane-bound lytic murein transglycosylase A (203 aa).

An N-terminal signal peptide occupies residues 1 to 15; the sequence is MKLRWLLILVVFLAG. The N-palmitoyl cysteine moiety is linked to residue C16. C16 carries the S-diacylglycerol cysteine lipid modification.

The protein belongs to the transglycosylase Slt family.

The protein resides in the cell outer membrane. The enzyme catalyses Endolytic cleavage of the (1-&gt;4)-beta-glycosidic linkage between N-acetylmuramic acid (MurNAc) and N-acetylglucosamine (GlcNAc) residues in peptidoglycan with concomitant formation of a 1,6-anhydrobond in the MurNAc residue.. In terms of biological role, murein-degrading enzyme. May play a role in recycling of muropeptides during cell elongation and/or cell division. Preferentially cleaves at a distance of more than two disaccharide units from the ends of the glycan chain. In Klebsiella pneumoniae subsp. pneumoniae (strain ATCC 700721 / MGH 78578), this protein is Endo-type membrane-bound lytic murein transglycosylase A.